A 691-amino-acid chain; its full sequence is Homeobox protein NOBOX (691 aa).

The span at 94–103 (ELTRGQKAGE) shows a compositional bias: basic and acidic residues. The tract at residues 94 to 233 (ELTRGQKAGE…NSARATHNPV (140 aa)) is disordered. Polar residues predominate over residues 216–228 (PTSSPGAPNSARA). The homeobox DNA-binding region spans 272 to 363 (RKKTRTLYRS…NRRAKWRKME (92 aa)). 3 disordered regions span residues 366–385 (NGKE…SQCS), 394–437 (VPME…AQRV), and 635–691 (QALG…SHVP). The span at 395-405 (PMEPKPDPFPQ) shows a compositional bias: pro residues. Residues 420-432 (TSDQTLAPTQPSE) show a composition bias toward polar residues. Over residues 679-691 (EEARGDDKNSHVP) the composition is skewed to basic and acidic residues.

In terms of tissue distribution, expressed in ovaries, testes and pancreas. Expressed within all stages of the adult female germline, from primordial follicles through to MII oocytes.

The protein localises to the nucleus. Its function is as follows. Transcription factor which may play a role in oogenesis. Binds preferentially to the DNA sequences 5'-TAATTG-3', 5'-TAGTTG-3' and 5'-TAATTA-3'. The sequence is that of Homeobox protein NOBOX (NOBOX) from Homo sapiens (Human).